A 179-amino-acid chain; its full sequence is Large ribosomal subunit protein uL5 (179 aa).

Belongs to the universal ribosomal protein uL5 family. In terms of assembly, part of the 50S ribosomal subunit; part of the 5S rRNA/L5/L18/L25 subcomplex. Contacts the 5S rRNA and the P site tRNA. Forms a bridge to the 30S subunit in the 70S ribosome.

This is one of the proteins that bind and probably mediate the attachment of the 5S RNA into the large ribosomal subunit, where it forms part of the central protuberance. In the 70S ribosome it contacts protein S13 of the 30S subunit (bridge B1b), connecting the 2 subunits; this bridge is implicated in subunit movement. Contacts the P site tRNA; the 5S rRNA and some of its associated proteins might help stabilize positioning of ribosome-bound tRNAs. This chain is Large ribosomal subunit protein uL5, found in Shewanella sp. (strain MR-4).